The chain runs to 205 residues: Adenylyl-sulfate kinase (205 aa).

31–38 lines the ATP pocket; the sequence is GLSGAGKS. The active-site Phosphoserine intermediate is the serine 105.

This sequence belongs to the APS kinase family.

The enzyme catalyses adenosine 5'-phosphosulfate + ATP = 3'-phosphoadenylyl sulfate + ADP + H(+). It functions in the pathway sulfur metabolism; hydrogen sulfide biosynthesis; sulfite from sulfate: step 2/3. Its function is as follows. Catalyzes the synthesis of activated sulfate. In Shewanella baltica (strain OS223), this protein is Adenylyl-sulfate kinase.